Reading from the N-terminus, the 139-residue chain is D-ribose pyranase (139 aa).

H20 acts as the Proton donor in catalysis. Substrate-binding positions include D28, H106, and 128-130 (YAN).

Belongs to the RbsD / FucU family. RbsD subfamily. In terms of assembly, homodecamer.

It is found in the cytoplasm. It catalyses the reaction beta-D-ribopyranose = beta-D-ribofuranose. Its pathway is carbohydrate metabolism; D-ribose degradation; D-ribose 5-phosphate from beta-D-ribopyranose: step 1/2. Its function is as follows. Catalyzes the interconversion of beta-pyran and beta-furan forms of D-ribose. The polypeptide is D-ribose pyranase (Actinobacillus pleuropneumoniae serotype 7 (strain AP76)).